A 131-amino-acid polypeptide reads, in one-letter code: Ribonuclease P protein component (131 aa).

It belongs to the RnpA family. Consists of a catalytic RNA component (M1 or rnpB) and a protein subunit.

It carries out the reaction Endonucleolytic cleavage of RNA, removing 5'-extranucleotides from tRNA precursor.. RNaseP catalyzes the removal of the 5'-leader sequence from pre-tRNA to produce the mature 5'-terminus. It can also cleave other RNA substrates such as 4.5S RNA. The protein component plays an auxiliary but essential role in vivo by binding to the 5'-leader sequence and broadening the substrate specificity of the ribozyme. The polypeptide is Ribonuclease P protein component (Acinetobacter baylyi (strain ATCC 33305 / BD413 / ADP1)).